A 413-amino-acid chain; its full sequence is Eukaryotic initiation factor 4A-8 (413 aa).

A Q motif motif is present at residues 40–68; the sequence is DSFDAMGLQENLLRGIYAYGFEKPSAIQQ. One can recognise a Helicase ATP-binding domain in the interval 71-241; it reads IVPFCKGLDV…RKFMNKPVRI (171 aa). Residue 84–91 coordinates ATP; that stretch reads AQSGTGKT. Residues 189 to 192 carry the DEAD box motif; sequence DEAD. Residues 252–413 enclose the Helicase C-terminal domain; sequence GIKQFYVNVD…ELPSNVADLL (162 aa).

Belongs to the DEAD box helicase family. eIF4A subfamily. EIF4F is a multi-subunit complex, the composition of which varies with external and internal environmental conditions. It is composed of at least EIF4A, EIF4E and EIF4G. In terms of tissue distribution, pollen specific.

The catalysed reaction is ATP + H2O = ADP + phosphate + H(+). Functionally, ATP-dependent RNA helicase which is a subunit of the eIF4F complex involved in cap recognition and is required for mRNA binding to ribosome. In the current model of translation initiation, eIF4A unwinds RNA secondary structures in the 5'-UTR of mRNAs which is necessary to allow efficient binding of the small ribosomal subunit, and subsequent scanning for the initiator codon. The polypeptide is Eukaryotic initiation factor 4A-8 (Nicotiana tabacum (Common tobacco)).